Reading from the N-terminus, the 586-residue chain is MATLTEPSSSLSFTSSHFSYGSIGSNHFSSSSASNPEVVSLTKLSSNLEQLLSNSDCDYSDAEIIVDGVPVGVHRCILAARSKFFQDLFKKEKKISKTEKPKYQLREMLPYGAVAHEAFLYFLSYIYTGRLKPFPLEVSTCVDPVCSHDCCRPAIDFVVQLMYASSVLQVPELVSSFQRRLCNFVEKTLVENVLPILMVAFNCKLTQLLDQCIERVARSDLYRFCIEKEVPPEVAEKIKQLRLISPQDEETSPKISEKLLERIGKILKALDSDDVELVKLLLTESDITLDQANGLHYSVVYSDPKVVAEILALDMGDVNYRNSRGYTVLHFAAMRREPSIIISLIDKGANASEFTSDGRSAVNILRRLTNPKDYHTKTAKGRESSKARLCIDILEREIRKNPMVLDTPMCSISMPEDLQMRLLYLEKRVGLAQLFFPTEAKVAMDIGNVEGTSEFTGLSPPSSGLTGNLSQVDLNETPHMQTQRLLTRMVALMKTVETGRRFFPYGSEVLDKYMAEYIDDDILDDFHFEKGSTHERRLKRMRYRELKDDVQKAYSKDKESKIARSCLSASSSPSSSSIRDDLHNTT.

A Phosphoserine modification is found at serine 10. The BTB domain occupies 60–135; sequence SDAEIIVDGV…IYTGRLKPFP (76 aa). The segment at 138–152 adopts a C2HC NPR-type zinc-finger fold; it reads VSTCVDPVCSHDCCR. Residues cysteine 141, cysteine 146, histidine 148, and cysteine 151 each contribute to the Zn(2+) site. 3 ANK repeats span residues 261–291, 293–320, and 324–353; these read ERIG…TLDQ, NGLH…DVNY, and RGYT…NASE. A salicylic acid-binding core (SBC) region spans residues 383 to 523; sequence ESSKARLCID…MAEYIDDDIL (141 aa). Position 428 (arginine 428) interacts with salicylate. The segment at 554-586 is disordered; sequence YSKDKESKIARSCLSASSSPSSSSIRDDLHNTT. The segment covering 565 to 577 has biased composition (low complexity); the sequence is SCLSASSSPSSSS.

It belongs to the plant 'ANKYRIN-BTB/POZ' family. 'NPR1-like' subfamily. As to quaternary structure, forms homodimers and heterodimers with NPR4 in the presence of salicylic acid (SA). Interacts with TGA2, TGA3, TGA5 and TGA6. Interacts with CUL3A, a core component of the cullin-RING ubiquitin ligases (CRL). Interacts with TGA2 in vivo in the nucleus. Binds to NPR1; this interaction is promoted by association with SA, probably due to conformational changes.

Its subcellular location is the nucleus. It functions in the pathway protein modification; protein ubiquitination. Functionally, salicylic acid (SA)-binding substrate-specific adapter of an E3 ubiquitin-protein ligase complex (CUL3-RBX1-BTB) which mediates the ubiquitination and subsequent proteasomal degradation of NPR1 in response to SA. Together with NPR4, acts as receptor of salicylic acid to monitor immunity in a NPR1-dependent manner and induce systemic acquired resistance (SAR). Involved in the regulation of basal defense responses against pathogens, and may be implicated in the cross-talk between the SA- and JA-dependent signaling pathways. The sequence is that of Regulatory protein NPR3 from Arabidopsis thaliana (Mouse-ear cress).